The sequence spans 197 residues: Probable proteasome subunit beta type-4 (197 aa).

It belongs to the peptidase T1B family. As to quaternary structure, the 26S proteasome consists of a 20S proteasome core and two 19S regulatory subunits. The 20S proteasome core is composed of 28 subunits that are arranged in four stacked rings, resulting in a barrel-shaped structure. The two end rings are each formed by seven alpha subunits, and the two central rings are each formed by seven beta subunits. The catalytic chamber with the active sites is on the inside of the barrel.

The protein resides in the cytoplasm. The protein localises to the nucleus. Non-catalytic component of the proteasome which degrades poly-ubiquitinated proteins in the cytoplasm and in the nucleus. It is essential for the regulated turnover of proteins and for the removal of misfolded proteins. The proteasome is a multicatalytic proteinase complex that is characterized by its ability to cleave peptides with Arg, Phe, Tyr, Leu, and Glu adjacent to the leaving group at neutral or slightly basic pH. It has an ATP-dependent proteolytic activity. The sequence is that of Probable proteasome subunit beta type-4 (PRE1) from Encephalitozoon cuniculi (strain GB-M1) (Microsporidian parasite).